We begin with the raw amino-acid sequence, 222 residues long: MIVDILSLFPGYFKGPFDESILKRAQEKGLLTIRLTDIRDFADNRFHRVDDRPYGGGPGMVMMPQPVTMAIQHVKTPEAKVIYLSPQGRTLNAVKCRQLALEKHLILLCGHYEGIDQRVLDEEVDEEISIGDYVLTNGCLAAIVLLDAFSRFIPGVLGHPSAAAEDSFEGGLLDYPHYTRPEVFQGCSVPNVLLSGNHQEIAKWRHEQALKKTQEIRPDLLA.

Residues Gly110 and 130–135 (IGDYVL) contribute to the S-adenosyl-L-methionine site.

This sequence belongs to the RNA methyltransferase TrmD family. In terms of assembly, homodimer.

The protein localises to the cytoplasm. It carries out the reaction guanosine(37) in tRNA + S-adenosyl-L-methionine = N(1)-methylguanosine(37) in tRNA + S-adenosyl-L-homocysteine + H(+). Specifically methylates guanosine-37 in various tRNAs. The chain is tRNA (guanine-N(1)-)-methyltransferase from Protochlamydia amoebophila (strain UWE25).